The following is a 435-amino-acid chain: AP-2 complex subunit mu (435 aa).

The residue at position 45 (serine 45) is a Phosphoserine. The residue at position 156 (threonine 156) is a Phosphothreonine. Positions 170–434 constitute an MHD domain; it reads RNELFLDVLE…IGRSGIYETR (265 aa). The a 1,2-diacyl-sn-glycero-3-phospho-(1D-myo-inositol-3,4,5-trisphosphate) site is built by lysine 341, lysine 345, and lysine 354.

Belongs to the adaptor complexes medium subunit family. As to quaternary structure, adaptor protein complex 2 (AP-2) is a heterotetramer composed of two large adaptins (alpha-type subunit AP2A1 or AP2A2 and beta-type subunit AP2B1), a medium adaptin (mu-type subunit AP2M1) and a small adaptin (sigma-type subunit AP2S1). Interacts with ATP6V1H and MEGF10. Interacts with EGFR and TTGN1. Interacts with F2R. Interacts with PIP5K1C; tyrosine phosphorylation of PIP5K1C weakens the interaction. Interacts with KIAA0319; required for clathrin-mediated endocytosis of KIAA0319. Interacts with DVL2 (via DEP domain). Interacts with KCNQ1; mediates estrogen-induced internalization via clathrin-coated vesicles. Interacts with P2RX4 (via internalization motif). Together with AP2A1 or AP2A2 and AP2B1, it interacts with ADAM10; this interaction facilitates ADAM10 endocytosis from the plasma membrane during long-term potentiation in hippocampal neurons. Probably interacts with ACE2 (via endocytic sorting signal motif); the interaction is inhibited by ACE2 phosphorylation. Interacts with RALBP1; the interaction is direct. Interacts with TMEM106B (via N-terminus). Phosphorylation at Thr-156 increases the affinity of the AP-2 complex for cargo membrane proteins during the initial stages of endocytosis.

It localises to the cell membrane. Its subcellular location is the membrane. The protein resides in the coated pit. Functionally, component of the adaptor protein complex 2 (AP-2). Adaptor protein complexes function in protein transport via transport vesicles in different membrane traffic pathways. Adaptor protein complexes are vesicle coat components and appear to be involved in cargo selection and vesicle formation. AP-2 is involved in clathrin-dependent endocytosis in which cargo proteins are incorporated into vesicles surrounded by clathrin (clathrin-coated vesicles, CCVs) which are destined for fusion with the early endosome. The clathrin lattice serves as a mechanical scaffold but is itself unable to bind directly to membrane components. Clathrin-associated adaptor protein (AP) complexes which can bind directly to both the clathrin lattice and to the lipid and protein components of membranes are considered to be the major clathrin adaptors contributing the CCV formation. AP-2 also serves as a cargo receptor to selectively sort the membrane proteins involved in receptor-mediated endocytosis. AP-2 seems to play a role in the recycling of synaptic vesicle membranes from the presynaptic surface. AP-2 recognizes Y-X-X-[FILMV] (Y-X-X-Phi) and [ED]-X-X-X-L-[LI] endocytosis signal motifs within the cytosolic tails of transmembrane cargo molecules. AP-2 may also play a role in maintaining normal post-endocytic trafficking through the ARF6-regulated, non-clathrin pathway. During long-term potentiation in hippocampal neurons, AP-2 is responsible for the endocytosis of ADAM10. The AP-2 mu subunit binds to transmembrane cargo proteins; it recognizes the Y-X-X-Phi motifs. The surface region interacting with to the Y-X-X-Phi motif is inaccessible in cytosolic AP-2, but becomes accessible through a conformational change following phosphorylation of AP-2 mu subunit at Thr-156 in membrane-associated AP-2. The membrane-specific phosphorylation event appears to involve assembled clathrin which activates the AP-2 mu kinase AAK1. Plays a role in endocytosis of frizzled family members upon Wnt signaling. The polypeptide is AP-2 complex subunit mu (AP2M1) (Bos taurus (Bovine)).